A 533-amino-acid chain; its full sequence is Peptide chain release factor 3 (533 aa).

Positions 9 to 284 (ARRRTFAIIS…ALCELSPPPL (276 aa)) constitute a tr-type G domain. GTP-binding positions include 18–25 (SHPDAGKT), 95–99 (DTPGH), and 149–152 (NKLD).

The protein belongs to the TRAFAC class translation factor GTPase superfamily. Classic translation factor GTPase family. PrfC subfamily.

It is found in the cytoplasm. Increases the formation of ribosomal termination complexes and stimulates activities of RF-1 and RF-2. It binds guanine nucleotides and has strong preference for UGA stop codons. It may interact directly with the ribosome. The stimulation of RF-1 and RF-2 is significantly reduced by GTP and GDP, but not by GMP. The polypeptide is Peptide chain release factor 3 (Cupriavidus necator (strain ATCC 17699 / DSM 428 / KCTC 22496 / NCIMB 10442 / H16 / Stanier 337) (Ralstonia eutropha)).